The sequence spans 428 residues: Elongation factor 1-alpha (428 aa).

The tr-type G domain occupies 5–225 (KPILNVAFIG…DAFQPPEKPT (221 aa)). Residues 14–21 (GHVDAGKS) are G1. Position 14–21 (14–21 (GHVDAGKS)) interacts with GTP. S21 provides a ligand contact to Mg(2+). The G2 stretch occupies residues 70–74 (GVTID). A G3 region spans residues 91 to 94 (DCPG). Residues 91–95 (DCPGH) and 149–152 (NKMD) each bind GTP. The interval 149 to 152 (NKMD) is G4. Residues 189–191 (ASL) form a G5 region.

It belongs to the TRAFAC class translation factor GTPase superfamily. Classic translation factor GTPase family. EF-Tu/EF-1A subfamily.

The protein localises to the cytoplasm. It catalyses the reaction GTP + H2O = GDP + phosphate + H(+). GTP hydrolase that promotes the GTP-dependent binding of aminoacyl-tRNA to the A-site of ribosomes during protein biosynthesis. In Methanococcus maripaludis (strain C5 / ATCC BAA-1333), this protein is Elongation factor 1-alpha.